Here is a 406-residue protein sequence, read N- to C-terminus: MQNVEIIYKNAKVRGILINEANGLITIKADNGYNLTFDRSEVEILSRVTIEEKKEKKTEVESFGTGEKSISILATGGTIASRVDYETGAVKPVSDPRLLFGGTELESKFNIRVVNVMNQLSENMKPADWIHLARKVMDETKHSSGIVVSHGTDTMSYTSSALAFMFERLAQPIIFVGSQRSSDRPSSDTKENMEGAINFAATDLGEVGIAMHKGISDGSIVLHRAVRSRKMHTSRRDAFESIDTVHLAEYTSSVRFFSDYRKAEEENLLLDHLDEKVSIIYFHPGLVASDVENMIEGKHAVVIMGTGLGHIAKDLIPVFKNFTKDGNFAIMTSQCIYGSVDMNVYSTGRELIAAGVISAGDMVPEVAYVKAMFTLGNYGREEFINVFNRNLRGEILNRLIPREVYI.

Residues 68–390 (KSISILATGG…EEFINVFNRN (323 aa)) enclose the Asparaginase/glutaminase domain. Residues threonine 78, threonine 152, aspartate 153, and lysine 230 contribute to the active site.

This sequence belongs to the asparaginase 1 family. GatD subfamily. As to quaternary structure, heterodimer of GatD and GatE.

It catalyses the reaction L-glutamyl-tRNA(Gln) + L-glutamine + ATP + H2O = L-glutaminyl-tRNA(Gln) + L-glutamate + ADP + phosphate + H(+). In terms of biological role, allows the formation of correctly charged Gln-tRNA(Gln) through the transamidation of misacylated Glu-tRNA(Gln) in organisms which lack glutaminyl-tRNA synthetase. The reaction takes place in the presence of glutamine and ATP through an activated gamma-phospho-Glu-tRNA(Gln). The GatDE system is specific for glutamate and does not act on aspartate. The chain is Glutamyl-tRNA(Gln) amidotransferase subunit D from Thermoplasma volcanium (strain ATCC 51530 / DSM 4299 / JCM 9571 / NBRC 15438 / GSS1).